The sequence spans 234 residues: Large ribosomal subunit protein uL1 (234 aa).

It belongs to the universal ribosomal protein uL1 family. As to quaternary structure, part of the 50S ribosomal subunit.

Its function is as follows. Binds directly to 23S rRNA. The L1 stalk is quite mobile in the ribosome, and is involved in E site tRNA release. In terms of biological role, protein L1 is also a translational repressor protein, it controls the translation of the L11 operon by binding to its mRNA. The sequence is that of Large ribosomal subunit protein uL1 from Campylobacter fetus subsp. fetus (strain 82-40).